The following is a 571-amino-acid chain: Sulfite reductase [NADPH] hemoprotein beta-component (571 aa).

Residues C435, C441, C480, and C484 each coordinate [4Fe-4S] cluster. C484 is a binding site for siroheme.

This sequence belongs to the nitrite and sulfite reductase 4Fe-4S domain family. Alpha(8)-beta(8). The alpha component is a flavoprotein, the beta component is a hemoprotein. It depends on siroheme as a cofactor. [4Fe-4S] cluster serves as cofactor.

It catalyses the reaction hydrogen sulfide + 3 NADP(+) + 3 H2O = sulfite + 3 NADPH + 4 H(+). Its pathway is sulfur metabolism; hydrogen sulfide biosynthesis; hydrogen sulfide from sulfite (NADPH route): step 1/1. Component of the sulfite reductase complex that catalyzes the 6-electron reduction of sulfite to sulfide. This is one of several activities required for the biosynthesis of L-cysteine from sulfate. The protein is Sulfite reductase [NADPH] hemoprotein beta-component of Dickeya chrysanthemi (strain Ech1591) (Dickeya zeae (strain Ech1591)).